A 390-amino-acid chain; its full sequence is Delta-aminolevulinic acid dehydratase, chloroplastic (390 aa).

The N-terminal 24 residues, 1 to 24 (MQMMQRNVVGQRPVAGSRRSLVVA), are a transit peptide targeting the chloroplast. Residues 34 to 69 (VSTNGKHRTGVPEGTPIVTPQDLPSRPRRNRRSESF) are disordered. Lys251 acts as the Schiff-base intermediate with substrate in catalysis. The 5-aminolevulinate site is built by Arg261 and Lys281. Glu297 contacts Mg(2+). Residue Lys312 is the Schiff-base intermediate with substrate of the active site. Residues Ser338 and Tyr377 each coordinate 5-aminolevulinate.

It belongs to the ALAD family. Homooctamer. It depends on Mg(2+) as a cofactor.

Its subcellular location is the plastid. The protein localises to the chloroplast. The enzyme catalyses 2 5-aminolevulinate = porphobilinogen + 2 H2O + H(+). It functions in the pathway porphyrin-containing compound metabolism; protoporphyrin-IX biosynthesis; coproporphyrinogen-III from 5-aminolevulinate: step 1/4. In terms of biological role, catalyzes an early step in the biosynthesis of tetrapyrroles. Binds two molecules of 5-aminolevulinate per subunit, each at a distinct site, and catalyzes their condensation to form porphobilinogen. This is Delta-aminolevulinic acid dehydratase, chloroplastic (HEMB) from Chlamydomonas reinhardtii (Chlamydomonas smithii).